The primary structure comprises 525 residues: Probable malate:quinone oxidoreductase (525 aa).

Belongs to the MQO family. The cofactor is FAD.

It carries out the reaction (S)-malate + a quinone = a quinol + oxaloacetate. It functions in the pathway carbohydrate metabolism; tricarboxylic acid cycle; oxaloacetate from (S)-malate (quinone route): step 1/1. The polypeptide is Probable malate:quinone oxidoreductase (Serratia proteamaculans (strain 568)).